We begin with the raw amino-acid sequence, 469 residues long: Keratin, type I cytoskeletal 26 (469 aa).

Positions 1-82 are head; sequence MSFRLSSGSR…ENEHGLLPGN (82 aa). The segment at 83 to 118 is coil 1A; sequence EKVTLQNLNDRLASYLDHVCTLEEANADLEQKIKGW. The IF rod domain occupies 83–398; it reads EKVTLQNLND…KLIDGEGRKS (316 aa). The linker 1 stretch occupies residues 119–140; it reads YEKYGPGSGRQLAYDCSKYFSV. Positions 141–232 are coil 1B; it reads TEDLKRQIIS…KNHQEEMKVM (92 aa). Positions 233 to 255 are linker 12; sequence QGAAGGNVNVEINAAPGVDLTVL. Residues 256–394 form a coil 2 region; it reads LNNMRAEYED…EMYCKLIDGE (139 aa). The tract at residues 395–465 is tail; that stretch reads GRKSKSTYCK…NITMEQRLPS (71 aa). Disordered stretches follow at residues 398 to 421 and 450 to 469; these read SKSTYCKSEGRGPKNSENQVKDSK and KSSKISNITMEQRLPSKVPQ. The span at 405-421 shows a compositional bias: basic and acidic residues; it reads SEGRGPKNSENQVKDSK.

The protein belongs to the intermediate filament family. As to quaternary structure, heterotetramer of two type I and two type II keratins.

The polypeptide is Keratin, type I cytoskeletal 26 (Bos taurus (Bovine)).